Here is a 222-residue protein sequence, read N- to C-terminus: uncharacterized protein (222 aa).

Residue Gly2 is the site of N-myristoyl glycine; by host attachment.

This sequence belongs to the mimivirus R683/R861 family.

This is an uncharacterized protein from Acanthamoeba polyphaga mimivirus (APMV).